A 400-amino-acid chain; its full sequence is 11-beta-hydroxysteroid dehydrogenase type 2 (400 aa).

NAD(+) is bound at residue 82-111 (TRAVLITGCDTGFGKETAKKLDAMGFTVLA). A substrate-binding site is contributed by serine 219. Catalysis depends on tyrosine 232, which acts as the Proton acceptor. A disordered region spans residues 378–400 (PGQPGPVHDTTQDPNPSPTVSAL). A compositionally biased stretch (polar residues) spans 389–400 (QDPNPSPTVSAL).

It belongs to the short-chain dehydrogenases/reductases (SDR) family. As to quaternary structure, interacts with ligand-free cytoplasmic NR3C2. As to expression, highly expressed in kidney, adrenal gland and distal colon, and at much lower levels in lung, hypothalamus, hippocampus, and midbrain.

The protein resides in the microsome. Its subcellular location is the endoplasmic reticulum. The catalysed reaction is an 11beta-hydroxysteroid + NAD(+) = an 11-oxosteroid + NADH + H(+). It catalyses the reaction corticosterone + NAD(+) = 11-dehydrocorticosterone + NADH + H(+). It carries out the reaction 11beta,17beta-dihydroxyandrost-4-ene-3-one + NAD(+) = 17beta-hydroxyandrost-4-ene-3,11-dione + NADH + H(+). The enzyme catalyses 11beta-hydroxyandrost-4-ene-3,17-dione + NAD(+) = androst-4-ene-3,11,17-trione + NADH + H(+). It participates in steroid metabolism. Its activity is regulated as follows. Inhibited by glycyrrhetinic acid. Induced by progesterone, through the Ihh signaling pathway. Functionally, catalyzes the conversion of biologically active 11beta-hydroxyglucocorticoids (11beta-hydroxysteroid) such as corticosterone, to inactive 11-ketoglucocorticoids (11-oxosteroid) such as 11-dehydrocorticosterone, in the presence of NAD(+). Functions as a dehydrogenase (oxidase), thereby decreasing the concentration of active glucocorticoids, thus protecting the nonselective mineralocorticoid receptor from occupation by glucocorticoids. Plays an important role in maintaining glucocorticoids balance during preimplantation and protects the fetus from excessive maternal corticosterone exposure. Catalyzes the oxidation of 11beta-hydroxytestosterone (11beta,17beta-dihydroxyandrost-4-ene-3-one) to 11-ketotestosterone (17beta-hydroxyandrost-4-ene-3,11-dione), a major bioactive androgen. Catalyzes the conversion of 11beta-hydroxyandrostenedione (11beta-hydroxyandrost-4-ene-3,17-dione) to 11-ketoandrostenedione (androst-4-ene-3,11,17-trione), which can be further metabolized to 11-ketotestosterone. Converts 7-beta-25-dihydroxycholesterol to 7-oxo-25-hydroxycholesterol in vitro. 7-beta-25-dihydroxycholesterol (not 7-oxo-25-hydroxycholesterol) acts as a ligand for the G-protein-coupled receptor (GPCR) Epstein-Barr virus-induced gene 2 (EBI2) and may thereby regulate immune cell migration. The sequence is that of 11-beta-hydroxysteroid dehydrogenase type 2 (Hsd11b2) from Rattus norvegicus (Rat).